Here is a 476-residue protein sequence, read N- to C-terminus: Probable rhodanese domain-containing dual specificity protein phosphatase (476 aa).

Residues 32–190 enclose the Rhodanese domain; it reads IGSSKIIIDL…FQKDYSFMCN (159 aa). Residues 208–350 form the Tyrosine-protein phosphatase domain; sequence YPSEIIKDFL…LKDYQQHLTL (143 aa). Cys-294 functions as the Phosphocysteine intermediate in the catalytic mechanism. Residues 425 to 436 show a composition bias toward low complexity; that stretch reads KTTTSSTTINNK. Positions 425 to 476 are disordered; it reads KTTTSSTTINNKGQQQDKAQEEKDSIFSYADKQEKMTHPTLHSPIELPQSSL. Basic and acidic residues predominate over residues 442 to 461; it reads KAQEEKDSIFSYADKQEKMT.

It belongs to the protein-tyrosine phosphatase family. Non-receptor class dual specificity subfamily.

It carries out the reaction O-phospho-L-tyrosyl-[protein] + H2O = L-tyrosyl-[protein] + phosphate. It catalyses the reaction O-phospho-L-seryl-[protein] + H2O = L-seryl-[protein] + phosphate. The catalysed reaction is O-phospho-L-threonyl-[protein] + H2O = L-threonyl-[protein] + phosphate. In terms of biological role, has a dual specificity toward Ser/Thr and Tyr-containing proteins. The sequence is that of Probable rhodanese domain-containing dual specificity protein phosphatase from Dictyostelium discoideum (Social amoeba).